Here is a 68-residue protein sequence, read N- to C-terminus: Large ribosomal subunit protein bL32 (68 aa).

The segment at 1 to 20 (MAVPQNRVTRSRRNMRRSHD) is disordered.

The protein belongs to the bacterial ribosomal protein bL32 family.

The polypeptide is Large ribosomal subunit protein bL32 (Cereibacter sphaeroides (strain ATCC 17029 / ATH 2.4.9) (Rhodobacter sphaeroides)).